Reading from the N-terminus, the 351-residue chain is Heat-inducible transcription repressor HrcA (351 aa).

Belongs to the HrcA family.

Negative regulator of class I heat shock genes (grpE-dnaK-dnaJ and groELS operons). Prevents heat-shock induction of these operons. This is Heat-inducible transcription repressor HrcA from Beutenbergia cavernae (strain ATCC BAA-8 / DSM 12333 / CCUG 43141 / JCM 11478 / NBRC 16432 / NCIMB 13614 / HKI 0122).